Consider the following 321-residue polypeptide: Basic leucine zipper 34 (321 aa).

Positions 97–189 (TDDDNLHSNP…SGNRILDPKR (93 aa)) are disordered. Low complexity-rich tracts occupy residues 110-133 (NNKNNNVGPTGSSSNTSTPSNSFN), 145-155 (NMNNNINNNYN), and 172-182 (SNNNSGDSSGN). The bZIP domain maps to 186–238 (DPKRVKRILANRQSAQRSRVRKLQYISELERSVTSLQAEVSVLSPRVAFLDHQ). The tract at residues 188 to 207 (KRVKRILANRQSAQRSRVRK) is basic motif. The leucine-zipper stretch occupies residues 214–235 (LERSVTSLQAEVSVLSPRVAFL).

As to quaternary structure, forms heterodimers with BZIP18, BZIP43 and VIP1/BZIP51. Expressed in vascular tissues of leaves, stems and siliques, anthers, filaments, tapetum, mature pollen grains, pistil vascular tissues and papillar cells, and funiculi.

The protein resides in the nucleus. Transcriptional activator involved in the sporophytic control of cell wall patterning and gametophytic control of pollen development. May play a role in the control of metabolic pathways regulating cellular transport and lipid metabolism. The chain is Basic leucine zipper 34 from Arabidopsis thaliana (Mouse-ear cress).